The sequence spans 179 residues: ATP synthase subunit delta 2 (179 aa).

This sequence belongs to the ATPase delta chain family. F-type ATPases have 2 components, F(1) - the catalytic core - and F(0) - the membrane proton channel. F(1) has five subunits: alpha(3), beta(3), gamma(1), delta(1), epsilon(1). F(0) has three main subunits: a(1), b(2) and c(10-14). The alpha and beta chains form an alternating ring which encloses part of the gamma chain. F(1) is attached to F(0) by a central stalk formed by the gamma and epsilon chains, while a peripheral stalk is formed by the delta and b chains.

It is found in the cell inner membrane. Functionally, f(1)F(0) ATP synthase produces ATP from ADP in the presence of a proton or sodium gradient. F-type ATPases consist of two structural domains, F(1) containing the extramembraneous catalytic core and F(0) containing the membrane proton channel, linked together by a central stalk and a peripheral stalk. During catalysis, ATP synthesis in the catalytic domain of F(1) is coupled via a rotary mechanism of the central stalk subunits to proton translocation. In terms of biological role, this protein is part of the stalk that links CF(0) to CF(1). It either transmits conformational changes from CF(0) to CF(1) or is implicated in proton conduction. This is ATP synthase subunit delta 2 from Syntrophotalea carbinolica (strain DSM 2380 / NBRC 103641 / GraBd1) (Pelobacter carbinolicus).